The following is a 624-amino-acid chain: Chaperone protein DnaK (624 aa).

A Phosphothreonine; by autocatalysis modification is found at threonine 174. Disordered stretches follow at residues lysine 544–serine 563 and asparagine 576–lysine 624. Positions glutamine 581–glycine 600 are enriched in low complexity. The segment covering serine 601–lysine 624 has biased composition (basic and acidic residues).

The protein belongs to the heat shock protein 70 family.

Functionally, acts as a chaperone. The protein is Chaperone protein DnaK of Lacticaseibacillus casei (strain BL23) (Lactobacillus casei).